Consider the following 405-residue polypeptide: MDMNTFPANTYCDSIVRFLDAIEYHDDNLTHDERVEGLRHVHSRTAQYFTEPLPRKVLKDVAPRRIAAVTRTISHFIVYCWSKLPREAQVDVSIYLSIINVLDDEISSEPSTQMATFWTDLVQGKQQKHPFWVLFNSHLPRLLRHYDSFCSFNIMRCTFDYFEGCWIEQHNFQGYPGADCYPLFLRRLNCLGGAVAGTIFPAAKFDEQKLFAEISCVMAQIDGPVALVNDLFSFYKEYDQDEANLVTNWCTVDGITMDQALTRLTDDTIHACVRILEILKDKDPDMLATIRGFIHGYVTWHICDFRYRLREIYDREDLGGSSAKFRDYFDTAINVGWVDVEEWTCQVQGFEVDGPVPKGSEIQAYRTNAFGFSVDTRRPHNMDYVGSSIISMFEWVTGYLKGKSR.

Residues Asp103, Glu168, Asn229, Ser233, Glu237, and Asp241 each coordinate Mg(2+). Positions 103 to 108 (DDEISS) match the D(D/E)XX(D/E) motif motif. An NSE motif motif is present at residues 227 to 237 (LVNDLFSFYKE). Positions 316–323 (EDLGGSSA) match the WxxxxxRY motif motif.

Belongs to the trichodiene synthase family. It depends on Mg(2+) as a cofactor.

Its pathway is secondary metabolite biosynthesis; terpenoid biosynthesis. Its function is as follows. Terpene cyclase; part of the gene cluster that mediates the biosynthesis of the sesquiterpenoid aspterric acid (AA), an inhibitor of dihydroxy-acid dehydratase (DHAD) effective as an herbicide. PbrA cyclizes farnesyl diphosphate (FPP) to produce (-)-daucane. The cytochrome P450 monooxygenase pbrBB then converts (-)-daucane into the alpha-epoxy carboxylate intermediate which is further converted into the tricyclic aspterric acid by the cytochrome P450 monooxygenase pbrC. The sequence is that of Terpene cyclase pbrA from Penicillium brasilianum.